Reading from the N-terminus, the 486-residue chain is Ribulose bisphosphate carboxylase large chain (486 aa).

The propeptide occupies 1-2 (MS). Residues asparagine 123 and threonine 173 each contribute to the substrate site. The active-site Proton acceptor is lysine 175. Substrate is bound at residue lysine 177. Residues lysine 201, aspartate 203, and glutamate 204 each coordinate Mg(2+). Position 201 is an N6-carboxylysine (lysine 201). Serine 208 is subject to Phosphoserine. Catalysis depends on histidine 294, which acts as the Proton acceptor. Substrate is bound by residues arginine 295 and histidine 327. Phosphothreonine is present on threonine 330. Residue serine 379 participates in substrate binding.

The protein belongs to the RuBisCO large chain family. Type I subfamily. In terms of assembly, heterohexadecamer of 8 large chains and 8 small chains; disulfide-linked. The disulfide link is formed within the large subunit homodimers. It depends on Mg(2+) as a cofactor. The disulfide bond which can form in the large chain dimeric partners within the hexadecamer appears to be associated with oxidative stress and protein turnover.

Its subcellular location is the plastid. It localises to the chloroplast. It carries out the reaction 2 (2R)-3-phosphoglycerate + 2 H(+) = D-ribulose 1,5-bisphosphate + CO2 + H2O. The enzyme catalyses D-ribulose 1,5-bisphosphate + O2 = 2-phosphoglycolate + (2R)-3-phosphoglycerate + 2 H(+). In terms of biological role, ruBisCO catalyzes two reactions: the carboxylation of D-ribulose 1,5-bisphosphate, the primary event in carbon dioxide fixation, as well as the oxidative fragmentation of the pentose substrate in the photorespiration process. Both reactions occur simultaneously and in competition at the same active site. This is Ribulose bisphosphate carboxylase large chain from Aethionema grandiflorum (Persian stone-cress).